A 296-amino-acid chain; its full sequence is UDP-N-acetylglucosamine transporter TMEM241 homolog (296 aa).

10 consecutive transmembrane segments (helical) span residues Ala7 to Val29, Trp41 to Ile61, Ser67 to Ser87, Leu93 to Gln113, Ile126 to Phe146, Asp147 to Phe167, Val187 to Leu207, Phe217 to Lys237, Ala248 to Phe266, and Val272 to Ala291.

It belongs to the nucleotide-sugar transporter family. SLC35A subfamily.

The protein resides in the golgi apparatus. Its subcellular location is the cis-Golgi network membrane. In terms of biological role, golgi-localized UDP-N-acetylglucosamine (UDP-GlcNAc) transporter that transports UDP-N-acetylglucosamine into Golgi lumen. The protein is UDP-N-acetylglucosamine transporter TMEM241 homolog (tmem241) of Xenopus laevis (African clawed frog).